The primary structure comprises 499 residues: Glycerol kinase (499 aa).

Thr12 serves as a coordination point for ADP. Residues Thr12, Thr13, and Ser14 each contribute to the ATP site. Thr12 serves as a coordination point for sn-glycerol 3-phosphate. An ADP-binding site is contributed by Arg16. 3 residues coordinate sn-glycerol 3-phosphate: Arg82, Glu83, and Tyr134. Arg82, Glu83, and Tyr134 together coordinate glycerol. His230 carries the post-translational modification Phosphohistidine; by HPr. Asp244 contributes to the sn-glycerol 3-phosphate binding site. Glycerol is bound by residues Asp244 and Gln245. The ADP site is built by Thr266 and Gly309. ATP contacts are provided by Thr266, Gly309, Gln313, and Gly410. ADP is bound by residues Gly410 and Asn414.

It belongs to the FGGY kinase family. Homotetramer and homodimer (in equilibrium). Post-translationally, the phosphoenolpyruvate-dependent sugar phosphotransferase system (PTS), including enzyme I, and histidine-containing protein (HPr) are required for the phosphorylation, which leads to the activation of the enzyme.

The enzyme catalyses glycerol + ATP = sn-glycerol 3-phosphate + ADP + H(+). It functions in the pathway polyol metabolism; glycerol degradation via glycerol kinase pathway; sn-glycerol 3-phosphate from glycerol: step 1/1. Activated by phosphorylation and inhibited by fructose 1,6-bisphosphate (FBP). In terms of biological role, key enzyme in the regulation of glycerol uptake and metabolism. Catalyzes the phosphorylation of glycerol to yield sn-glycerol 3-phosphate. This chain is Glycerol kinase, found in Staphylococcus epidermidis (strain ATCC 12228 / FDA PCI 1200).